Consider the following 465-residue polypeptide: Mitochondrial distribution and morphology protein 10 (465 aa).

It belongs to the MDM10 family. Component of the ER-mitochondria encounter structure (ERMES) or MDM complex, composed of MMM1, MDM10, MDM12 and MDM34. Associates with the mitochondrial outer membrane sorting assembly machinery SAM(core) complex.

Its subcellular location is the mitochondrion outer membrane. Its function is as follows. Component of the ERMES/MDM complex, which serves as a molecular tether to connect the endoplasmic reticulum and mitochondria. Components of this complex are involved in the control of mitochondrial shape and protein biogenesis and may function in phospholipid exchange. MDM10 is involved in the late assembly steps of the general translocase of the mitochondrial outer membrane (TOM complex). Functions in the TOM40-specific route of the assembly of outer membrane beta-barrel proteins, including the association of TOM40 with the receptor TOM22 and small TOM proteins. Can associate with the SAM(core) complex as well as the MDM12-MMM1 complex, both involved in late steps of the major beta-barrel assembly pathway, that is responsible for biogenesis of all outer membrane beta-barrel proteins. May act as a switch that shuttles between both complexes and channels precursor proteins into the TOM40-specific pathway. Plays a role in mitochondrial morphology and in the inheritance of mitochondria. This is Mitochondrial distribution and morphology protein 10 from Eremothecium gossypii (strain ATCC 10895 / CBS 109.51 / FGSC 9923 / NRRL Y-1056) (Yeast).